A 166-amino-acid chain; its full sequence is Ribosome biogenesis regulatory protein homolog (166 aa).

Ser34 and Ser64 each carry phosphoserine. The segment at 144-166 (KEKKLTSKQVRNTSKKIKRSRRH) is disordered. A compositionally biased stretch (basic residues) spans 156 to 166 (TSKKIKRSRRH).

The protein belongs to the RRS1 family. Component of a hexameric 5S RNP precursor complex, composed of 5S RNA, rrs1, rpf2, rpl5a/rpl5b, rpl11a/rpl11b and syo1; this complex acts as a precursor for ribosome assembly. Interacts with sad1.

The protein resides in the nucleus. It is found in the nucleolus. Its function is as follows. Involved in ribosomal large subunit assembly. The sequence is that of Ribosome biogenesis regulatory protein homolog from Schizosaccharomyces pombe (strain 972 / ATCC 24843) (Fission yeast).